The sequence spans 396 residues: 1-deoxy-D-xylulose 5-phosphate reductoisomerase (396 aa).

T10, G11, S12, I13, and N123 together coordinate NADPH. 1-deoxy-D-xylulose 5-phosphate is bound at residue K124. E125 serves as a coordination point for NADPH. D149 lines the Mn(2+) pocket. Positions 150, 151, 185, and 208 each coordinate 1-deoxy-D-xylulose 5-phosphate. Position 151 (E151) interacts with Mn(2+). G214 is a binding site for NADPH. Residues S221, N226, K227, and E230 each contribute to the 1-deoxy-D-xylulose 5-phosphate site. E230 lines the Mn(2+) pocket.

This sequence belongs to the DXR family. Requires Mg(2+) as cofactor. Mn(2+) serves as cofactor.

The catalysed reaction is 2-C-methyl-D-erythritol 4-phosphate + NADP(+) = 1-deoxy-D-xylulose 5-phosphate + NADPH + H(+). The protein operates within isoprenoid biosynthesis; isopentenyl diphosphate biosynthesis via DXP pathway; isopentenyl diphosphate from 1-deoxy-D-xylulose 5-phosphate: step 1/6. Functionally, catalyzes the NADPH-dependent rearrangement and reduction of 1-deoxy-D-xylulose-5-phosphate (DXP) to 2-C-methyl-D-erythritol 4-phosphate (MEP). The chain is 1-deoxy-D-xylulose 5-phosphate reductoisomerase from Shewanella frigidimarina (strain NCIMB 400).